The sequence spans 226 residues: RPA-interacting protein A (226 aa).

An interaction with importin beta region spans residues 1 to 45; sequence MEAERRHRALYKGTTPPWKETYRKRCVERLKRNRSKLLDKFRQVG. Residues 49–171 form an interaction with RPA1 region; it reads HGGVGGSFLV…QCGVYINTQS (123 aa). The segment at 144-219 adopts an RIP-type zinc-finger fold; that stretch reads CPVCNRNYLT…ASLFMSCQEC (76 aa).

Interacts directly with the rpa1 subunit of RPA complex. Interacts with importin beta, but not with importin alpha. Forms a complex with the RPA complex and importin beta, which is dissociated by Ran-GTP.

The protein resides in the nucleus. In terms of biological role, mediates the import of RPA complex into the nucleus, via its interaction with importin beta. This Xenopus laevis (African clawed frog) protein is RPA-interacting protein A (rpain-a).